We begin with the raw amino-acid sequence, 821 residues long: Lysosomal beta glucosidase (821 aa).

The N-terminal stretch at 1–24 is a signal peptide; the sequence is MKTIKSLFLLSLLIVNLLISSTYG. A propeptide spanning residues 25 to 69 is cleaved from the precursor; sequence SSIRVSIVGGEEAEVIEKPRTFGNKRELKLEYSQIYPKKQLNQEN. Asn-113, Asn-146, and Asn-266 each carry an N-linked (GlcNAc...) asparagine glycan. Residue Asp-363 is part of the active site. Asn-535, Asn-555, Asn-703, and Asn-721 each carry an N-linked (GlcNAc...) asparagine glycan.

Belongs to the glycosyl hydrolase 3 family. Glycosylated. The polyoligosaccharides are of the high-mannose type and are highly substituted with both phosphate and sulfate moieties.

It is found in the lysosome. It carries out the reaction Hydrolysis of terminal, non-reducing beta-D-glucosyl residues with release of beta-D-glucose.. The chain is Lysosomal beta glucosidase (gluA) from Dictyostelium discoideum (Social amoeba).